The primary structure comprises 331 residues: ADP-L-glycero-D-manno-heptose-6-epimerase (331 aa).

Residues 11-12, 32-33, Lys-39, Lys-54, 75-79, and Asn-92 each bind NADP(+); these read FI, DN, and EGACS. Tyr-139 serves as the catalytic Proton acceptor. Lys-143 contacts NADP(+). Asn-168 provides a ligand contact to substrate. NADP(+) is bound by residues Val-169 and Lys-177. The Proton acceptor role is filled by Lys-177. Substrate-binding positions include Arg-179, His-186, 200–203, Arg-213, and Tyr-292; that span reads FGEY.

The protein belongs to the NAD(P)-dependent epimerase/dehydratase family. HldD subfamily. As to quaternary structure, homopentamer. The cofactor is NADP(+).

The catalysed reaction is ADP-D-glycero-beta-D-manno-heptose = ADP-L-glycero-beta-D-manno-heptose. It participates in nucleotide-sugar biosynthesis; ADP-L-glycero-beta-D-manno-heptose biosynthesis; ADP-L-glycero-beta-D-manno-heptose from D-glycero-beta-D-manno-heptose 7-phosphate: step 4/4. Catalyzes the interconversion between ADP-D-glycero-beta-D-manno-heptose and ADP-L-glycero-beta-D-manno-heptose via an epimerization at carbon 6 of the heptose. This chain is ADP-L-glycero-D-manno-heptose-6-epimerase, found in Cupriavidus metallidurans (strain ATCC 43123 / DSM 2839 / NBRC 102507 / CH34) (Ralstonia metallidurans).